A 438-amino-acid chain; its full sequence is Ribosomal protein uS12 methylthiotransferase RimO (438 aa).

An MTTase N-terminal domain is found at 1–115 (MKYFILSLGC…LDKLLADLGE (115 aa)). [4Fe-4S] cluster-binding residues include cysteine 10, cysteine 46, cysteine 78, cysteine 150, cysteine 154, and cysteine 157. The Radical SAM core domain maps to 136–366 (KSNEVYRYIK…MEVQQEISLN (231 aa)). Positions 369 to 437 (KALVGKKIPV…IYDLKGEFIN (69 aa)) constitute a TRAM domain.

This sequence belongs to the methylthiotransferase family. RimO subfamily. Requires [4Fe-4S] cluster as cofactor.

It is found in the cytoplasm. The enzyme catalyses L-aspartate(89)-[ribosomal protein uS12]-hydrogen + (sulfur carrier)-SH + AH2 + 2 S-adenosyl-L-methionine = 3-methylsulfanyl-L-aspartate(89)-[ribosomal protein uS12]-hydrogen + (sulfur carrier)-H + 5'-deoxyadenosine + L-methionine + A + S-adenosyl-L-homocysteine + 2 H(+). Functionally, catalyzes the methylthiolation of an aspartic acid residue of ribosomal protein uS12. The sequence is that of Ribosomal protein uS12 methylthiotransferase RimO from Carboxydothermus hydrogenoformans (strain ATCC BAA-161 / DSM 6008 / Z-2901).